The sequence spans 185 residues: Large ribosomal subunit protein uL22 (185 aa).

This sequence belongs to the universal ribosomal protein uL22 family. In terms of assembly, component of the large ribosomal subunit. Mature ribosomes consist of a small (40S) and a large (60S) subunit. The 40S subunit contains about 32 different proteins and 1 molecule of RNA (18S). The 60S subunit contains 45 different proteins and 3 molecules of RNA (25S, 5.8S and 5S).

It is found in the cytoplasm. Component of the ribosome, a large ribonucleoprotein complex responsible for the synthesis of proteins in the cell. The small ribosomal subunit (SSU) binds messenger RNAs (mRNAs) and translates the encoded message by selecting cognate aminoacyl-transfer RNA (tRNA) molecules. The large subunit (LSU) contains the ribosomal catalytic site termed the peptidyl transferase center (PTC), which catalyzes the formation of peptide bonds, thereby polymerizing the amino acids delivered by tRNAs into a polypeptide chain. The nascent polypeptides leave the ribosome through a tunnel in the LSU and interact with protein factors that function in enzymatic processing, targeting, and the membrane insertion of nascent chains at the exit of the ribosomal tunnel. The sequence is that of Large ribosomal subunit protein uL22 from Candida albicans (strain SC5314 / ATCC MYA-2876) (Yeast).